The primary structure comprises 418 residues: Metal tolerance protein 1 (418 aa).

Topologically, residues 1–56 (MDSHNSAPPQIAEVRMDISSSTSVAAGNKVCRGAACDFSDSSNSSKDARERMASMR) are cytoplasmic. The helical transmembrane segment at 57-77 (KLIIAVILCIIFMAVEVVGGI) threads the bilayer. Residues 78–89 (KANSLAILTDAA) are Vacuolar-facing. The helical transmembrane segment at 90–110 (HLLSDVAAFAISLFSLWAAGW) threads the bilayer. Topologically, residues 111-122 (EATPQQSYGFFR) are cytoplasmic. Residues 123-143 (IEILGALVSIQLIWLLAGILV) form a helical membrane-spanning segment. Over 144 to 160 (YEAIVRLINESGEVQGS) the chain is Vacuolar. A helical transmembrane segment spans residues 161–181 (LMFAVSAFGLFVNIIMAVLLG). Residues 182 to 246 (HDHGHGHGHG…HHPGTGHHHH (65 aa)) form a required for zinc-binding region. Residues 182–282 (HDHGHGHGHG…RRNINVHSAY (101 aa)) lie on the Cytoplasmic side of the membrane. The disordered stretch occupies residues 186-248 (HGHGHGHGHG…PGTGHHHHDA (63 aa)). Basic and acidic residues predominate over residues 196–227 (HSHDHDHGGSDHDHHHHEDQEHGHVHHHEDGH). Positions 235 to 245 (LHHHPGTGHHH) are enriched in basic residues. The chain crosses the membrane as a helical span at residues 283–303 (LHVLGDSIQSIGVMIGGAIIW). Over 304-307 (YKPE) the chain is Vacuolar. Residues 308-328 (WKIIDLICTLIFSVIVLFTTI) traverse the membrane as a helical segment. The Cytoplasmic segment spans residues 329–418 (KMLRNILEVL…SHVTIQIERE (90 aa)).

Belongs to the cation diffusion facilitator (CDF) transporter (TC 2.A.4) family. SLC30A subfamily.

It localises to the vacuole membrane. In terms of biological role, involved in sequestration of excess zinc in the cytoplasm into vacuoles to maintain zinc homeostasis. The protein is Metal tolerance protein 1 (MTP1) of Oryza sativa subsp. japonica (Rice).